A 538-amino-acid chain; its full sequence is Dolichol kinase (538 aa).

Residues 1-13 (MTRECPSPAPGPG) are Lumenal-facing. The chain crosses the membrane as a helical span at residues 14–34 (APLSGSVLAEAAVVFAVVLSI). Topologically, residues 35–74 (HATVWDRYSWCAVALAVQAFYVQYKWDRLLQQGSAVFQFR) are cytoplasmic. A helical transmembrane segment spans residues 75–95 (MSANSGLLPASMVMPLLGLVM). Over 96-111 (KERCQTAGNPFFERFG) the chain is Lumenal. A helical membrane pass occupies residues 112 to 132 (IVVAATGMAVALFSSVLALGI). The Cytoplasmic segment spans residues 133–134 (TR). Residues 135 to 155 (PVPTNTCVILGLAGGVIIYIM) traverse the membrane as a helical segment. Residues 156 to 163 (KHSLSVGE) lie on the Lumenal side of the membrane. Residues 164 to 184 (VIEVLEVLLIFVYLNMILLYL) form a helical membrane-spanning segment. Topologically, residues 185 to 188 (LPRC) are cytoplasmic. A helical transmembrane segment spans residues 189–209 (FTPGEALLVLGGISFVLNQLI). Residues 210–224 (KRSLTLVESQGDPVD) lie on the Lumenal side of the membrane. A helical transmembrane segment spans residues 225–245 (FFLLVVVVGMVLMGIFFSTLF). The Cytoplasmic portion of the chain corresponds to 246–254 (VFMDSGTWA). Residues 255–275 (SSIFFHLMTCVLSLGVVLPWL) form a helical membrane-spanning segment. The Lumenal portion of the chain corresponds to 276–297 (HRLIRRNPLLWLLQFLFQTDTR). A helical transmembrane segment spans residues 298–318 (IYLLAYWSLLATLACLVVLYQ). The Cytoplasmic portion of the chain corresponds to 319–337 (NAKRSSSESKKHQAPTIAR). A helical membrane pass occupies residues 338–354 (KYFHLIVVATYIPGIIF). Residues 355-359 (DRPLL) lie on the Lumenal side of the membrane. The chain crosses the membrane as a helical span at residues 360–380 (YVAATVCLAVFIFLEYVRYFR). Topologically, residues 381 to 401 (IKPLGHTLRSFLSLFLDERDS) are cytoplasmic. A helical transmembrane segment spans residues 402–422 (GPLILTHIYLLLGMSLPIWLI). Residues 423 to 436 (PRPCTQKGSLGGAR) are Lumenal-facing. A helical transmembrane segment spans residues 437 to 457 (ALVPYAGVLAVGVGDTVASIF). Residues 458–472 (GSTMGEIRWPGTKKT) lie on the Cytoplasmic side of the membrane. Residues 459-474 (STMGEIRWPGTKKTFE) are CTP-binding. A helical transmembrane segment spans residues 473 to 493 (FEGTMTSIFAQIISVALILIF). Over 494–495 (DS) the chain is Lumenal. The chain crosses the membrane as a helical span at residues 496–516 (GVDLNYSYAWILGSISTVSLL). Residues 517-538 (EAYTTQIDNLLLPLYLLILLMA) are Cytoplasmic-facing.

The protein belongs to the polyprenol kinase family. As to expression, ubiquitous.

The protein localises to the endoplasmic reticulum membrane. The catalysed reaction is a di-trans,poly-cis-dolichol + CTP = a di-trans,poly-cis-dolichyl phosphate + CDP + H(+). It functions in the pathway protein modification; protein glycosylation. Its function is as follows. Catalyzes CTP-mediated phosphorylation of dolichol, the terminal step in de novo dolichyl monophosphate (Dol-P) biosynthesis. Dol-P is a lipid carrier essential for the synthesis of N-linked and O-linked oligosaccharides and for GPI anchors. This is Dolichol kinase (DOLK) from Homo sapiens (Human).